The following is a 1120-amino-acid chain: DNA-directed RNA polymerase subunit beta (1120 aa).

This sequence belongs to the RNA polymerase beta chain family. In plastids the minimal PEP RNA polymerase catalytic core is composed of four subunits: alpha, beta, beta', and beta''. When a (nuclear-encoded) sigma factor is associated with the core the holoenzyme is formed, which can initiate transcription.

The protein localises to the plastid. It localises to the chloroplast. The enzyme catalyses RNA(n) + a ribonucleoside 5'-triphosphate = RNA(n+1) + diphosphate. Its function is as follows. DNA-dependent RNA polymerase catalyzes the transcription of DNA into RNA using the four ribonucleoside triphosphates as substrates. The protein is DNA-directed RNA polymerase subunit beta of Gracilaria tenuistipitata var. liui (Red alga).